The sequence spans 253 residues: NAD-dependent protein deacylase 2 (253 aa).

In terms of domain architecture, Deacetylase sirtuin-type spans 1 to 252 (MEDEIRKAAE…VEEVKRLRSE (252 aa)). NAD(+) contacts are provided by residues 23-42 (GAGISAESGIPTFRGEDGLW) and 100-103 (QNID). Residue histidine 118 is the Proton acceptor of the active site. Positions 126, 129, 150, and 153 each coordinate Zn(2+). NAD(+) contacts are provided by residues 191–193 (GSS), 217–219 (NAE), and alanine 235.

The protein belongs to the sirtuin family. Class III subfamily. The cofactor is Zn(2+).

It localises to the cytoplasm. The catalysed reaction is N(6)-acetyl-L-lysyl-[protein] + NAD(+) + H2O = 2''-O-acetyl-ADP-D-ribose + nicotinamide + L-lysyl-[protein]. Its function is as follows. NAD-dependent protein deacetylase which modulates the activities of several proteins which are inactive in their acetylated form. Deacetylates the N-terminal lysine residue of Alba, the major archaeal chromatin protein and that, in turn, increases Alba's DNA binding affinity, thereby repressing transcription. This chain is NAD-dependent protein deacylase 2, found in Archaeoglobus fulgidus (strain ATCC 49558 / DSM 4304 / JCM 9628 / NBRC 100126 / VC-16).